A 312-amino-acid chain; its full sequence is MADGDSGSERGGGGGPCGFQPASRGGGEQETQELASKRLDIQNKRFYLDVKQNAKGRFLKIAEVGAGGSKSRLTLSMAVAAEFRDSLGDFIEHYAQLGPSSPEQLAAGAEEGGGPRRALKSEFLVRENRKYYLDLKENQRGRFLRIRQTVNRGGGGFGAGPGPGGLQSGQTIALPAQGLIEFRDALAKLIDDYGGEDDELAGGPGGGAGGPGGGLYGELPEGTSITVDSKRFFFDVGCNKYGVFLRVSEVKPSYRNAITVPFKAWGKFGGAFCRYADEMKEIQERQRDKLYERRGGGSGGGEESEGEEVDED.

The tract at residues Met1 to Gln32 is disordered. The residue at position 2 (Ala2) is an N-acetylalanine. A phosphoserine mark is found at Ser6 and Ser8. Arg24 carries the post-translational modification Omega-N-methylarginine. The segment at Glu28–Tyr254 is DNA-binding. Thr31 is subject to Phosphothreonine. Ser101 carries the phosphoserine modification. Arg152 is subject to Omega-N-methylarginine. Position 267 is an N6-acetyllysine (Lys267). Positions Glu284–Gly295 are enriched in basic and acidic residues. The tract at residues Glu284 to Asp312 is disordered. Omega-N-methylarginine is present on Arg294. A phosphoserine mark is found at Ser298 and Ser304. A compositionally biased stretch (acidic residues) spans Glu302 to Asp312.

This sequence belongs to the PUR DNA-binding protein family. As to quaternary structure, homodimer, heterodimer with PURA and heterotrimer with PURA and YBX1/Y-box protein 1. Interacts with MYOCD and SRF. In terms of tissue distribution, expressed in myocardium of heart failure patients.

It localises to the nucleus. Functionally, transcriptional regulator which can act as an activator or a repressor. Represses the transcription of ACTA2 in fibroblasts and smooth muscle cells via its ability to interact with the purine-rich strand of a MCAT- containing element in the 5' flanking region of the gene. Represses the transcription of MYOCD, capable of repressing all isoforms of MYOCD but the magnitude of the repressive effects is most notable for the SMC- specific isoforms. Promotes hepatic glucose production by activating the transcription of ADCY6, leading to cAMP accumulation, increased PKA activity, CREB activation, and increased transcription of PCK1 and G6PC genes. Has capacity to bind repeated elements in single-stranded DNA such as the purine-rich single strand of the PUR element located upstream of the MYC gene. Participates in transcriptional and translational regulation of alpha-MHC expression in cardiac myocytes by binding to the purine-rich negative regulatory (PNR) element Modulates constitutive liver galectin-3 gene transcription by binding to its promoter. May play a role in the dendritic transport of a subset of mRNAs. In Homo sapiens (Human), this protein is Transcriptional regulator protein Pur-beta (PURB).